We begin with the raw amino-acid sequence, 147 residues long: Hemoglobin subunit beta (147 aa).

The 145-residue stretch at 3-147 folds into the Globin domain; it reads EWTDSERAII…VVSALGREYH (145 aa). Heme b contacts are provided by histidine 64 and histidine 93.

Belongs to the globin family. Heterotetramer of two alpha chains and two beta chains. In terms of tissue distribution, red blood cells.

Involved in oxygen transport from gills to the various peripheral tissues. The polypeptide is Hemoglobin subunit beta (hbb) (Gadus morhua (Atlantic cod)).